Reading from the N-terminus, the 514-residue chain is Adenylosuccinate synthetase 2, chloroplastic (514 aa).

The N-terminal 56 residues, Met1–Arg56, are a transit peptide targeting the chloroplast. Residues Gly100–Lys106 and Gly128–Thr130 each bind GTP. Residue Asp101 is the Proton acceptor of the active site. 2 residues coordinate Mg(2+): Asp101 and Gly128. IMP contacts are provided by residues Asp101–Lys104, Asn126–His129, Thr218, Arg232, Gln312, Thr327, and Arg391. Residue His129 is the Proton donor of the active site. Residue Thr387 to Arg393 participates in substrate binding. GTP contacts are provided by residues Arg393, Lys419 to Asp421, and Gly502 to Gly504.

This sequence belongs to the adenylosuccinate synthetase family. As to quaternary structure, homodimer. Mg(2+) serves as cofactor.

The protein resides in the plastid. Its subcellular location is the chloroplast. The enzyme catalyses IMP + L-aspartate + GTP = N(6)-(1,2-dicarboxyethyl)-AMP + GDP + phosphate + 2 H(+). The protein operates within purine metabolism; AMP biosynthesis via de novo pathway; AMP from IMP: step 1/2. Its function is as follows. Plays an important role in the de novo pathway and in the salvage pathway of purine nucleotide biosynthesis. Catalyzes the first committed step in the biosynthesis of AMP from IMP. The chain is Adenylosuccinate synthetase 2, chloroplastic from Physcomitrium patens (Spreading-leaved earth moss).